A 189-amino-acid chain; its full sequence is Crossover junction endodeoxyribonuclease RuvC (189 aa).

Residues aspartate 9, glutamate 70, and aspartate 143 contribute to the active site. Mg(2+) is bound by residues aspartate 9, glutamate 70, and aspartate 143. The segment covering methionine 162–tryptophan 178 has biased composition (low complexity). A disordered region spans residues methionine 162–arginine 189. Positions alanine 179 to arginine 189 are enriched in basic and acidic residues.

Belongs to the RuvC family. Homodimer which binds Holliday junction (HJ) DNA. The HJ becomes 2-fold symmetrical on binding to RuvC with unstacked arms; it has a different conformation from HJ DNA in complex with RuvA. In the full resolvosome a probable DNA-RuvA(4)-RuvB(12)-RuvC(2) complex forms which resolves the HJ. Requires Mg(2+) as cofactor.

It is found in the cytoplasm. The enzyme catalyses Endonucleolytic cleavage at a junction such as a reciprocal single-stranded crossover between two homologous DNA duplexes (Holliday junction).. The RuvA-RuvB-RuvC complex processes Holliday junction (HJ) DNA during genetic recombination and DNA repair. Endonuclease that resolves HJ intermediates. Cleaves cruciform DNA by making single-stranded nicks across the HJ at symmetrical positions within the homologous arms, yielding a 5'-phosphate and a 3'-hydroxyl group; requires a central core of homology in the junction. The consensus cleavage sequence is 5'-(A/T)TT(C/G)-3'. Cleavage occurs on the 3'-side of the TT dinucleotide at the point of strand exchange. HJ branch migration catalyzed by RuvA-RuvB allows RuvC to scan DNA until it finds its consensus sequence, where it cleaves and resolves the cruciform DNA. This Paenarthrobacter aurescens (strain TC1) protein is Crossover junction endodeoxyribonuclease RuvC.